We begin with the raw amino-acid sequence, 137 residues long: Phosphoribosyl-AMP cyclohydrolase (137 aa).

Aspartate 84 provides a ligand contact to Mg(2+). A Zn(2+)-binding site is contributed by cysteine 85. Mg(2+)-binding residues include aspartate 86 and aspartate 88. Zn(2+) is bound by residues cysteine 101 and cysteine 108.

Belongs to the PRA-CH family. Homodimer. Requires Mg(2+) as cofactor. The cofactor is Zn(2+).

It localises to the cytoplasm. The enzyme catalyses 1-(5-phospho-beta-D-ribosyl)-5'-AMP + H2O = 1-(5-phospho-beta-D-ribosyl)-5-[(5-phospho-beta-D-ribosylamino)methylideneamino]imidazole-4-carboxamide. The protein operates within amino-acid biosynthesis; L-histidine biosynthesis; L-histidine from 5-phospho-alpha-D-ribose 1-diphosphate: step 3/9. Functionally, catalyzes the hydrolysis of the adenine ring of phosphoribosyl-AMP. In Pelodictyon phaeoclathratiforme (strain DSM 5477 / BU-1), this protein is Phosphoribosyl-AMP cyclohydrolase.